Here is a 149-residue protein sequence, read N- to C-terminus: Cytochrome c' (149 aa).

A signal peptide spans 1–19; it reads MRRVLLATLMAALPAAAMA. Positions 29, 89, 90, 138, 141, and 142 each coordinate heme c.

Monomer and homodimer. Binds 1 heme c group covalently per subunit.

Cytochrome c' is the most widely occurring bacterial c-type cytochrome. Cytochromes c' are high-spin proteins and the heme has no sixth ligand. Their exact function is not known. This Cereibacter sphaeroides (strain ATCC 17023 / DSM 158 / JCM 6121 / CCUG 31486 / LMG 2827 / NBRC 12203 / NCIMB 8253 / ATH 2.4.1.) (Rhodobacter sphaeroides) protein is Cytochrome c' (cycP).